The primary structure comprises 493 residues: Probable malate:quinone oxidoreductase (493 aa).

The protein belongs to the MQO family. Requires FAD as cofactor.

The catalysed reaction is (S)-malate + a quinone = a quinol + oxaloacetate. It participates in carbohydrate metabolism; tricarboxylic acid cycle; oxaloacetate from (S)-malate (quinone route): step 1/1. In Mycobacterium tuberculosis (strain ATCC 25177 / H37Ra), this protein is Probable malate:quinone oxidoreductase.